Consider the following 171-residue polypeptide: MGALSSMFWALWYILPAYFANASPVLLGGGRPIDGGRKWRDGNRILGDGKTWRGFLGGVSVGTLVGVLQYYLTPAFYGSLKTAVLLAFLLSFGALMGDLVGSFIKRRLNLPRGYPAVGLDQLGFLISALAFAYPVKTISSGQMLFLLIFTPLVHWGANYFAYKMGWKSVPW.

5 helical membrane-spanning segments follow: residues 7–27, 55–75, 84–104, 115–135, and 141–161; these read MFWA…PVLL, FLGG…LTPA, VLLA…GSFI, PAVG…AYPV, and GQML…NYFA.

This sequence belongs to the CDP-archaeol synthase family. Mg(2+) serves as cofactor.

It is found in the cell membrane. The enzyme catalyses 2,3-bis-O-(geranylgeranyl)-sn-glycerol 1-phosphate + CTP + H(+) = CDP-2,3-bis-O-(geranylgeranyl)-sn-glycerol + diphosphate. It participates in membrane lipid metabolism; glycerophospholipid metabolism. Its function is as follows. Catalyzes the formation of CDP-2,3-bis-(O-geranylgeranyl)-sn-glycerol (CDP-archaeol) from 2,3-bis-(O-geranylgeranyl)-sn-glycerol 1-phosphate (DGGGP) and CTP. This reaction is the third ether-bond-formation step in the biosynthesis of archaeal membrane lipids. The sequence is that of CDP-archaeol synthase from Thermococcus gammatolerans (strain DSM 15229 / JCM 11827 / EJ3).